Reading from the N-terminus, the 274-residue chain is Mitochondrial S-adenosylmethionine carrier protein (274 aa).

Solcar repeat units follow at residues 4-77 (PGFT…VKSL), 86-168 (FKPV…LKAL), and 177-265 (VDSW…ARSL). Transmembrane regions (helical) follow at residues 5–25 (GFTA…LILF), 49–69 (IYAG…AFFL), 85–105 (HFKP…ACLI), 142–162 (RGYK…FPLW), 182–202 (SAVC…PLDV), and 238–258 (FAGV…FLGA).

Belongs to the mitochondrial carrier (TC 2.A.29) family.

It localises to the mitochondrion inner membrane. The enzyme catalyses S-adenosyl-L-homocysteine(out) + S-adenosyl-L-methionine(in) = S-adenosyl-L-homocysteine(in) + S-adenosyl-L-methionine(out). In terms of biological role, mitochondrial S-adenosyl-L-methionine/S-adenosyl-L-homocysteine antiporter. Mediates the exchange of cytosolic S-adenosyl-L-methionine, the predominant methyl-group donor for macromolecule methylation processes, for mitochondrial S-adenosylhomocysteine(SAH), a by-product of methylation reactions. This chain is Mitochondrial S-adenosylmethionine carrier protein, found in Mus musculus (Mouse).